We begin with the raw amino-acid sequence, 280 residues long: Formamidopyrimidine-DNA glycosylase (280 aa).

The Schiff-base intermediate with DNA role is filled by proline 2. The active-site Proton donor is glutamate 3. Lysine 59 (proton donor; for beta-elimination activity) is an active-site residue. Residues histidine 92 and arginine 111 each coordinate DNA. Residues 239–273 form an FPG-type zinc finger; the sequence is NVYGQTGLPCNRCGTPIVKTKVAQRGTHYCPQCQQ. The active-site Proton donor; for delta-elimination activity is arginine 263.

The protein belongs to the FPG family. Monomer. The cofactor is Zn(2+).

It catalyses the reaction Hydrolysis of DNA containing ring-opened 7-methylguanine residues, releasing 2,6-diamino-4-hydroxy-5-(N-methyl)formamidopyrimidine.. The enzyme catalyses 2'-deoxyribonucleotide-(2'-deoxyribose 5'-phosphate)-2'-deoxyribonucleotide-DNA = a 3'-end 2'-deoxyribonucleotide-(2,3-dehydro-2,3-deoxyribose 5'-phosphate)-DNA + a 5'-end 5'-phospho-2'-deoxyribonucleoside-DNA + H(+). Functionally, involved in base excision repair of DNA damaged by oxidation or by mutagenic agents. Acts as a DNA glycosylase that recognizes and removes damaged bases. Has a preference for oxidized purines, such as 7,8-dihydro-8-oxoguanine (8-oxoG). Has AP (apurinic/apyrimidinic) lyase activity and introduces nicks in the DNA strand. Cleaves the DNA backbone by beta-delta elimination to generate a single-strand break at the site of the removed base with both 3'- and 5'-phosphates. This Enterococcus faecalis (strain ATCC 700802 / V583) protein is Formamidopyrimidine-DNA glycosylase.